Reading from the N-terminus, the 203-residue chain is Holliday junction branch migration complex subunit RuvA (203 aa).

The tract at residues 1-63 (MIGKLSGKVD…EEHMHLYGFL (63 aa)) is domain I. Residues 64-142 (TLEEKIFFNL…KISSGSAIIK (79 aa)) are domain II. The flexible linker stretch occupies residues 143–149 (ESLNIKN). A domain III region spans residues 150-203 (ITPVASNEVIKALVNLGFSRFEAQNAVQGIITQNPEISIDELIKTALKNRNSNF).

This sequence belongs to the RuvA family. As to quaternary structure, homotetramer. Forms an RuvA(8)-RuvB(12)-Holliday junction (HJ) complex. HJ DNA is sandwiched between 2 RuvA tetramers; dsDNA enters through RuvA and exits via RuvB. An RuvB hexamer assembles on each DNA strand where it exits the tetramer. Each RuvB hexamer is contacted by two RuvA subunits (via domain III) on 2 adjacent RuvB subunits; this complex drives branch migration. In the full resolvosome a probable DNA-RuvA(4)-RuvB(12)-RuvC(2) complex forms which resolves the HJ.

The protein resides in the cytoplasm. Its function is as follows. The RuvA-RuvB-RuvC complex processes Holliday junction (HJ) DNA during genetic recombination and DNA repair, while the RuvA-RuvB complex plays an important role in the rescue of blocked DNA replication forks via replication fork reversal (RFR). RuvA specifically binds to HJ cruciform DNA, conferring on it an open structure. The RuvB hexamer acts as an ATP-dependent pump, pulling dsDNA into and through the RuvAB complex. HJ branch migration allows RuvC to scan DNA until it finds its consensus sequence, where it cleaves and resolves the cruciform DNA. In Rickettsia peacockii (strain Rustic), this protein is Holliday junction branch migration complex subunit RuvA.